We begin with the raw amino-acid sequence, 828 residues long: Glycerol-3-phosphate acyltransferase (828 aa).

The HXXXXD motif motif lies at cysteine 309–isoleucine 314.

This sequence belongs to the GPAT/DAPAT family.

The protein localises to the cell inner membrane. The catalysed reaction is sn-glycerol 3-phosphate + an acyl-CoA = a 1-acyl-sn-glycero-3-phosphate + CoA. Its pathway is phospholipid metabolism; CDP-diacylglycerol biosynthesis; CDP-diacylglycerol from sn-glycerol 3-phosphate: step 1/3. The protein is Glycerol-3-phosphate acyltransferase of Pseudomonas entomophila (strain L48).